The chain runs to 633 residues: Breast carcinoma-amplified sequence 1 homolog (633 aa).

Disordered stretches follow at residues 1–34 (MGNQ…CVQN) and 57–422 (SSKD…KLFW). Polar residues-rich tracts occupy residues 24–34 (KVTSDNECVQN) and 57–68 (SSKDNVATSSPK). Ser127 is modified (phosphoserine). The span at 278 to 288 (VDTTENSSSIM) shows a compositional bias: polar residues. The span at 300-318 (TETKKDPEDTKATKADSVC) shows a compositional bias: basic and acidic residues. At Ser328 the chain carries Phosphoserine. Thr330 is modified (phosphothreonine). A compositionally biased stretch (polar residues) spans 359–378 (NSPTTSANLKSDKANFTPQE). Ser360 is subject to Phosphoserine. The segment covering 400–410 (SEGRDSGKEKA) has biased composition (basic and acidic residues). Ser425 and Ser443 each carry phosphoserine. The disordered stretch occupies residues 454–633 (ESSLQTVDLS…VSIGPVGKSK (180 aa)). Residues 471-481 (TDVKVKEESKP) are compositionally biased toward basic and acidic residues. A compositionally biased stretch (polar residues) spans 510–522 (KDSSCQTSNSVEK). The residue at position 523 (Thr523) is a Phosphothreonine. A Phosphoserine modification is found at Ser525. Residues 537 to 555 (KNKETSSSKDKKSVDKKSA) are compositionally biased toward basic and acidic residues. Phosphoserine is present on residues Ser601 and Ser615. Residues 614-633 (MSDAQVQTDPVSIGPVGKSK) are interacts with DYNLL1 AND DYNLL2.

In terms of assembly, homodimer. Interacts with DYNLL1 and DYNLL2. In terms of tissue distribution, highly expressed in the brain and, more specifically, in oligodendrocytes. Expressed in the Schwann cells (at protein level).

Its subcellular location is the cytoplasm. Functionally, required for myelination. The sequence is that of Breast carcinoma-amplified sequence 1 homolog (Bcas1) from Mus musculus (Mouse).